The following is a 122-amino-acid chain: MIKKLDRDAARQKKHMRIRKRVKGTEERPRLCVFRSLNHIYAQVVNDVTGRTLVAASSLDGEFKAANVSGGNIEGAKKVGELIAKKALEKGIDKVVFDRGGYIYHGRIAALAEAAREAGLQF.

The protein belongs to the universal ribosomal protein uL18 family. Part of the 50S ribosomal subunit; part of the 5S rRNA/L5/L18/L25 subcomplex. Contacts the 5S and 23S rRNAs.

In terms of biological role, this is one of the proteins that bind and probably mediate the attachment of the 5S RNA into the large ribosomal subunit, where it forms part of the central protuberance. The sequence is that of Large ribosomal subunit protein uL18 from Heliobacterium modesticaldum (strain ATCC 51547 / Ice1).